The chain runs to 355 residues: Gentisate 1,2-dioxygenase (355 aa).

The 69-residue stretch at 106 to 174 (MQLLLPGEWA…GNEPVVWLDV (69 aa)) folds into the Cupin type-2 domain.

This sequence belongs to the gentisate 1,2-dioxygenase family.

The enzyme catalyses 2,5-dihydroxybenzoate + O2 = 3-maleylpyruvate + H(+). Its pathway is aromatic compound metabolism; naphthalene degradation. In terms of biological role, catalyzes the oxygen-dependent ring fission of gentisate between the carboxyl and proximal hydroxyl groups at positions 1 and 2 of the aromatic ring to form maleylpyruvate. Can also catalyze oxidation of alkyl- and halogenated gentisates. Exhibits higher affinity for 3-substituted gentisates than for gentisate but has higher activity with gentisate. The protein is Gentisate 1,2-dioxygenase of Ralstonia sp.